A 501-amino-acid polypeptide reads, in one-letter code: MVLEMLNPMNISSMVSEAVLFGSIAILLLIGLLLWVWNYEDTSSIPGPGYFLGIGPLISHFRFLWMGIGSACNYYNKMYGEFMRVWIGGEETLIISKSSSIFHIMKHNHYTCRFGSKLGLECIGMHEKGIMFNNNPALWKAVRPFFTKALSGPGLVRMVTVCADSITKHLDKLEEVRNDLGYVDVLTLMRRIMLDTSNNLFLGIPLDESALVHKVQGYFDAWQALLLKPDIFFKISWLYRKYEKSVKDLKDAMEILIEEKRHRISTAEKLEDSMDFTTQLIFAEKRGELTKENVNQCVLEMMIAAPDTMSITVFFMLFLIANHPQVEEELMKEIYTVVGERDIRNDDMQKLKVVENFIYESMRYQPVVDFVMRKALEDDVIDGYPVKKGTNIILNIGRMHRLEFFPKPNEFTLENFAKNVPYRYFQPFGFGPRACAGKYIAMVMMKVILVTLLRRFQVQTQQGQCVEKMQKKNDLSLHPHETSGLLEMIFIPRNSDKCLEH.

Residue Cys435 participates in heme binding.

It belongs to the cytochrome P450 family. Heme is required as a cofactor. As to expression, ovary.

It localises to the membrane. It catalyses the reaction testosterone + 3 reduced [NADPH--hemoprotein reductase] + 3 O2 = 17beta-estradiol + formate + 3 oxidized [NADPH--hemoprotein reductase] + 4 H2O + 4 H(+). The catalysed reaction is androst-4-ene-3,17-dione + 3 reduced [NADPH--hemoprotein reductase] + 3 O2 = estrone + formate + 3 oxidized [NADPH--hemoprotein reductase] + 4 H2O + 4 H(+). Its function is as follows. Catalyzes the formation of aromatic C18 estrogens from C19 androgens. This chain is Aromatase 3 (CYP19A3), found in Sus scrofa (Pig).